The following is a 1932-amino-acid chain: DOCK-like protein 1 (1932 aa).

The region spanning 1410–1824 (LLEANRPELF…EIERYSRTLS (415 aa)) is the DOCKER domain. Residues 1908–1921 (STFLAGSQPNTNTD) show a composition bias toward polar residues. Residues 1908–1932 (STFLAGSQPNTNTDSQHKHDYSHSG) are disordered. The segment covering 1922–1932 (SQHKHDYSHSG) has biased composition (basic and acidic residues).

The protein belongs to the DOCK family. In terms of assembly, forms an active heterodimer with LMO1.

The protein resides in the cytoplasm. The protein localises to the mitochondrion. Its function is as follows. Forms a transiant heterodimeric complex with LMO1, that acts as a guanine nucleotide exchange factor exchange factor (GEF) for the small GTPase RHO5. DCK1, LMO1 and RHO5 relocate to mitochondria upon oxidative stress and trigger cell death. The DCK1/LMO1/RHO5 signaling module mediates mitochondrial turnover under nitrogen starvation conditions via mitophagy. The DCK1/LMO1/RHO5 signaling module plays also a function in cell wall integrity signaling. The protein is DOCK-like protein 1 of Saccharomyces cerevisiae (strain ATCC 204508 / S288c) (Baker's yeast).